Reading from the N-terminus, the 337-residue chain is Phosphate acyltransferase (337 aa).

This sequence belongs to the PlsX family. Homodimer. Probably interacts with PlsY.

It is found in the cytoplasm. It carries out the reaction a fatty acyl-[ACP] + phosphate = an acyl phosphate + holo-[ACP]. The protein operates within lipid metabolism; phospholipid metabolism. Functionally, catalyzes the reversible formation of acyl-phosphate (acyl-PO(4)) from acyl-[acyl-carrier-protein] (acyl-ACP). This enzyme utilizes acyl-ACP as fatty acyl donor, but not acyl-CoA. The protein is Phosphate acyltransferase of Latilactobacillus sakei subsp. sakei (strain 23K) (Lactobacillus sakei subsp. sakei).